The following is a 540-amino-acid chain: 2-isopropylmalate synthase (540 aa).

The 264-residue stretch at 8–271 (VLIFDTTLRD…NPFFGREEDS (264 aa)) folds into the Pyruvate carboxyltransferase domain. Residues D17, H208, H210, and N244 each contribute to the Mn(2+) site. The regulatory domain stretch occupies residues 408 to 540 (QLKLVQVSCG…PVVLESRPTL (133 aa)).

The protein belongs to the alpha-IPM synthase/homocitrate synthase family. LeuA type 1 subfamily. As to quaternary structure, homodimer. It depends on Mn(2+) as a cofactor.

It is found in the cytoplasm. It catalyses the reaction 3-methyl-2-oxobutanoate + acetyl-CoA + H2O = (2S)-2-isopropylmalate + CoA + H(+). It participates in amino-acid biosynthesis; L-leucine biosynthesis; L-leucine from 3-methyl-2-oxobutanoate: step 1/4. Its function is as follows. Catalyzes the condensation of the acetyl group of acetyl-CoA with 3-methyl-2-oxobutanoate (2-ketoisovalerate) to form 3-carboxy-3-hydroxy-4-methylpentanoate (2-isopropylmalate). The chain is 2-isopropylmalate synthase from Synechococcus sp. (strain CC9605).